Consider the following 584-residue polypeptide: Alpha-glucosidase MAL32 (584 aa).

Residue Asp214 is the Nucleophile of the active site. The active-site Proton donor is the Glu276.

It belongs to the glycosyl hydrolase 13 family.

It carries out the reaction Hydrolysis of terminal, non-reducing (1-&gt;4)-linked alpha-D-glucose residues with release of alpha-D-glucose.. In Saccharomyces cerevisiae (strain ATCC 204508 / S288c) (Baker's yeast), this protein is Alpha-glucosidase MAL32 (MAL32).